Here is a 137-residue protein sequence, read N- to C-terminus: Acidic phospholipase A2 VP8 (137 aa).

The first 16 residues, 1–16 (MRILWIVAVCLIGVEG), serve as a signal peptide directing secretion. 7 cysteine pairs are disulfide-bonded: C41/C130, C43/C59, C58/C110, C64/C137, C65/C103, C72/C96, and C90/C101. Positions 42, 44, and 46 each coordinate Ca(2+). H62 is an active-site residue. Residue D63 coordinates Ca(2+). D104 is an active-site residue.

It belongs to the phospholipase A2 family. Group II subfamily. D49 sub-subfamily. In terms of assembly, does not form a complex. Requires Ca(2+) as cofactor. Expressed by the venom gland.

The protein localises to the secreted. It carries out the reaction a 1,2-diacyl-sn-glycero-3-phosphocholine + H2O = a 1-acyl-sn-glycero-3-phosphocholine + a fatty acid + H(+). In terms of biological role, snake venom phospholipase A2 (PLA2) that is not toxic by itself, but the synergistical mixture of a basic and this acidic protein is lethal. PLA2 catalyzes the calcium-dependent hydrolysis of the 2-acyl groups in 3-sn-phosphoglycerides. The chain is Acidic phospholipase A2 VP8 from Daboia palaestinae (Palestine viper).